Here is a 460-residue protein sequence, read N- to C-terminus: Bifunctional protein GlmU (460 aa).

Residues 1–230 form a pyrophosphorylase region; it reads MSNNYAIILA…FDESLGVNDR (230 aa). Residues 9–12, K23, Q73, and 78–79 each bind UDP-N-acetyl-alpha-D-glucosamine; these read LAAG and GT. Residue D103 coordinates Mg(2+). 4 residues coordinate UDP-N-acetyl-alpha-D-glucosamine: G140, E155, N170, and N228. Mg(2+) is bound at residue N228. Positions 231-251 are linker; the sequence is VALATAEAVMRKRINEKHMVN. The tract at residues 252 to 460 is N-acetyltransferase; sequence GVTFINPDAT…TRFPFHPSQK (209 aa). UDP-N-acetyl-alpha-D-glucosamine-binding residues include R333 and K351. The Proton acceptor role is filled by H363. Residues Y366 and N377 each coordinate UDP-N-acetyl-alpha-D-glucosamine. Acetyl-CoA is bound by residues A380, 386 to 387, S405, A423, and R440; that span reads NY.

In the N-terminal section; belongs to the N-acetylglucosamine-1-phosphate uridyltransferase family. This sequence in the C-terminal section; belongs to the transferase hexapeptide repeat family. As to quaternary structure, homotrimer. Mg(2+) serves as cofactor.

The protein resides in the cytoplasm. It catalyses the reaction alpha-D-glucosamine 1-phosphate + acetyl-CoA = N-acetyl-alpha-D-glucosamine 1-phosphate + CoA + H(+). It carries out the reaction N-acetyl-alpha-D-glucosamine 1-phosphate + UTP + H(+) = UDP-N-acetyl-alpha-D-glucosamine + diphosphate. The protein operates within nucleotide-sugar biosynthesis; UDP-N-acetyl-alpha-D-glucosamine biosynthesis; N-acetyl-alpha-D-glucosamine 1-phosphate from alpha-D-glucosamine 6-phosphate (route II): step 2/2. It functions in the pathway nucleotide-sugar biosynthesis; UDP-N-acetyl-alpha-D-glucosamine biosynthesis; UDP-N-acetyl-alpha-D-glucosamine from N-acetyl-alpha-D-glucosamine 1-phosphate: step 1/1. It participates in bacterial outer membrane biogenesis; LPS lipid A biosynthesis. In terms of biological role, catalyzes the last two sequential reactions in the de novo biosynthetic pathway for UDP-N-acetylglucosamine (UDP-GlcNAc). The C-terminal domain catalyzes the transfer of acetyl group from acetyl coenzyme A to glucosamine-1-phosphate (GlcN-1-P) to produce N-acetylglucosamine-1-phosphate (GlcNAc-1-P), which is converted into UDP-GlcNAc by the transfer of uridine 5-monophosphate (from uridine 5-triphosphate), a reaction catalyzed by the N-terminal domain. This Streptococcus suis (strain 98HAH33) protein is Bifunctional protein GlmU.